We begin with the raw amino-acid sequence, 551 residues long: Glucose-6-phosphate isomerase (551 aa).

The active-site Proton donor is the glutamate 349. Catalysis depends on residues histidine 378 and lysine 480.

The protein belongs to the GPI family.

The protein localises to the cytoplasm. The catalysed reaction is alpha-D-glucose 6-phosphate = beta-D-fructose 6-phosphate. The protein operates within carbohydrate biosynthesis; gluconeogenesis. It participates in carbohydrate degradation; glycolysis; D-glyceraldehyde 3-phosphate and glycerone phosphate from D-glucose: step 2/4. Its function is as follows. Catalyzes the reversible isomerization of glucose-6-phosphate to fructose-6-phosphate. In Prochlorococcus marinus (strain MIT 9313), this protein is Glucose-6-phosphate isomerase.